The following is a 305-amino-acid chain: Superkiller complex protein 8 (305 aa).

7 WD repeats span residues 14–57, 62–101, 104–143, 146–187, 188–227, 230–269, and 272–305; these read AHED…LEMQ, GHQLGVVSVDVSPSGNIMASSSLDAHIRLWDLESGKQIRS, AGPVDAWSVAFSPDSQHLATGSHVGKVNIFGVETGKKEYS, TRGK…HTLE, GHAMPIRSLTFSTDSQLLVTASDDGYIKIYDVQHASLAAT, GHGSWVLNVAFSPDDAHFVSSSSDKSVKVWDVSARTCVHT, and DHQDQVWGVKYNRNGSKIVSVGDDQEIHVYDCPI.

This sequence belongs to the SKI8 family. In terms of assembly, component of the PAF1 complex. Component of the SKI complex.

The protein resides in the nucleus. The protein localises to the cytoplasm. In terms of biological role, component of the PAF1 complex (PAF1C) which has multiple functions during transcription by RNA polymerase II and is implicated in regulation of development and maintenance of embryonic stem cell pluripotency. PAF1C associates with RNA polymerase II through interaction with POLR2A CTD non-phosphorylated and 'Ser-2'- and 'Ser-5'-phosphorylated forms and is involved in transcriptional elongation, acting both independently and synergistically with TCEA1 and in cooperation with the DSIF complex and HTATSF1. Also acts as a component of the SKI complex, a multiprotein complex that assists the RNA-degrading exosome during the mRNA decay and quality-control pathways. The SKI complex catalyzes mRNA extraction from 80S ribosomal complexes in the 3'-5' direction and channels mRNA to the cytosolic exosome for degradation. The polypeptide is Superkiller complex protein 8 (skic8) (Xenopus laevis (African clawed frog)).